Consider the following 216-residue polypeptide: Thymidylate kinase (216 aa).

Residue 10-17 (GPDGAGKS) participates in ATP binding.

It belongs to the thymidylate kinase family.

It carries out the reaction dTMP + ATP = dTDP + ADP. In terms of biological role, phosphorylation of dTMP to form dTDP in both de novo and salvage pathways of dTTP synthesis. The protein is Thymidylate kinase of Lactobacillus acidophilus (strain ATCC 700396 / NCK56 / N2 / NCFM).